The sequence spans 900 residues: Probable dipeptidyl-aminopeptidase B (900 aa).

The segment at 1 to 83 (MARTDQGLGA…DILSHPRDKS (83 aa)) is disordered. Topologically, residues 1-90 (MARTDQGLGA…DKSKRSRGSR (90 aa)) are cytoplasmic. Low complexity predominate over residues 24 to 39 (NSFSSTDSLSTDGSLF). Over residues 44-55 (NATQFQKSTQLP) the composition is skewed to polar residues. Residues 91-111 (WIWVIGLLCLGGWILAFILFW) form a helical; Signal-anchor for type II membrane protein membrane-spanning segment. Residues 112-900 (GRRNNNSDIS…HHVGSALAAT (789 aa)) lie on the Vacuolar side of the membrane. N-linked (GlcNAc...) asparagine glycans are attached at residues Asn-150, Asn-195, Asn-348, Asn-410, Asn-514, Asn-639, and Asn-644. Catalysis depends on Ser-753, which acts as the Charge relay system. Asn-812 carries an N-linked (GlcNAc...) asparagine glycan. Active-site charge relay system residues include Asp-830 and His-863.

It belongs to the peptidase S9B family.

The protein localises to the vacuole membrane. The catalysed reaction is Release of an N-terminal dipeptide, Xaa-Yaa-|-Zaa-, from a polypeptide, preferentially when Yaa is Pro, provided Zaa is neither Pro nor hydroxyproline.. Functionally, type IV dipeptidyl-peptidase which removes N-terminal dipeptides sequentially from polypeptides having unsubstituted N-termini provided that the penultimate residue is proline. In Talaromyces stipitatus (strain ATCC 10500 / CBS 375.48 / QM 6759 / NRRL 1006) (Penicillium stipitatum), this protein is Probable dipeptidyl-aminopeptidase B (dapB).